Here is a 549-residue protein sequence, read N- to C-terminus: Cytochrome c oxidase subunit 1 homolog, bacteroid (549 aa).

3 consecutive transmembrane segments (helical) span residues 12–32 (IGESGLAVVFAATAFLCVIAA), 39–59 (PFAFHAALSAAASVAAVFCIV), and 87–107 (FSSFMAMFWGIAGFLVGLIIA). His131 is a binding site for heme b. 8 helical membrane-spanning segments follow: residues 132-152 (TSAVIFAFGGNVLIATSFYVV), 168-188 (FVVVGYNFFILVAGTGYLLGV), 201-221 (ADLWLTIVWVVYLLVFLATII), 228-248 (IFVANWFYLAFIVTIAVLHLG), 279-299 (GHNAVGFFLTAGFLAIMYYFI), 312-332 (LSIIHFWALIFLYIWAGPHHL), 344-364 (LGMTFSIMLWMPSWGGMINGL), and 382-402 (MLVVSVAFYGMSTFEGPMMSI). His280, His330, and His331 together coordinate Cu cation. Positions 418 and 420 each coordinate heme b. The next 3 membrane-spanning stretches (helical) occupy residues 423 to 443 (ALGWVGFVSFGALYCLVPWAW), 458 to 478 (FWVATLGIVLYISAMWVSGIL), and 512 to 532 (AGGGLFLIGALIMAYNLWMTV).

The protein belongs to the heme-copper respiratory oxidase family. The cofactor is Cu(2+). Heme b serves as cofactor.

The protein localises to the cell membrane. The catalysed reaction is 4 Fe(II)-[cytochrome c] + O2 + 8 H(+)(in) = 4 Fe(III)-[cytochrome c] + 2 H2O + 4 H(+)(out). Its pathway is energy metabolism; oxidative phosphorylation. In terms of biological role, cytochrome c oxidase is the component of the respiratory chain that catalyzes the reduction of oxygen to water. Subunits 1-3 form the functional core of the enzyme complex. Co I is the catalytic subunit of the enzyme. Electrons originating in cytochrome c or a quinol are transferred to the bimetallic center formed by a high-spin heme and copper B. The sequence is that of Cytochrome c oxidase subunit 1 homolog, bacteroid (fixN) from Bradyrhizobium diazoefficiens (strain JCM 10833 / BCRC 13528 / IAM 13628 / NBRC 14792 / USDA 110).